We begin with the raw amino-acid sequence, 272 residues long: Ribosomal RNA small subunit methyltransferase A (272 aa).

Asn16, Leu18, Gly43, Glu64, Asp89, and Asn110 together coordinate S-adenosyl-L-methionine.

This sequence belongs to the class I-like SAM-binding methyltransferase superfamily. rRNA adenine N(6)-methyltransferase family. RsmA subfamily.

It is found in the cytoplasm. It carries out the reaction adenosine(1518)/adenosine(1519) in 16S rRNA + 4 S-adenosyl-L-methionine = N(6)-dimethyladenosine(1518)/N(6)-dimethyladenosine(1519) in 16S rRNA + 4 S-adenosyl-L-homocysteine + 4 H(+). Specifically dimethylates two adjacent adenosines (A1518 and A1519) in the loop of a conserved hairpin near the 3'-end of 16S rRNA in the 30S particle. May play a critical role in biogenesis of 30S subunits. The polypeptide is Ribosomal RNA small subunit methyltransferase A (Pseudomonas fluorescens (strain Pf0-1)).